The sequence spans 132 residues: MECVKQLCRNHLRLDNLTDPVRSVLTKGTTAEKVQLAACCLGVVCSIICLALGIAAAAVGVSCGGFALGLGIIAILLGIVLFATSALDVLENHGLVGCPFKLPCKSSPANEPAVQFFKGKNGSADQVILVTQ.

2 consecutive transmembrane segments (helical) span residues 41 to 61 (LGVVCSIICLALGIAAAAVGV) and 66 to 86 (FALGLGIIAILLGIVLFATSA).

Its subcellular location is the secreted. The protein localises to the host vacuole. The protein resides in the host pathogen-containing vacuole. It is found in the host pathogen-containing vacuole membrane. Its function is as follows. Inclusion membrane protein probably involved in early modification events of the chlamydial inclusion. The polypeptide is Inclusion membrane protein E (Chlamydia trachomatis serovar L2 (strain ATCC VR-902B / DSM 19102 / 434/Bu)).